The sequence spans 295 residues: Acetylglutamate kinase (295 aa).

Substrate is bound by residues Gly-66 to Gly-67, Arg-88, and Asn-193.

Belongs to the acetylglutamate kinase family. ArgB subfamily.

It is found in the cytoplasm. It catalyses the reaction N-acetyl-L-glutamate + ATP = N-acetyl-L-glutamyl 5-phosphate + ADP. The protein operates within amino-acid biosynthesis; L-arginine biosynthesis; N(2)-acetyl-L-ornithine from L-glutamate: step 2/4. Catalyzes the ATP-dependent phosphorylation of N-acetyl-L-glutamate. The sequence is that of Acetylglutamate kinase from Rhizobium leguminosarum bv. trifolii (strain WSM2304).